The primary structure comprises 166 residues: Cyclic pyranopterin monophosphate synthase (166 aa).

Substrate-binding positions include Leu-83–His-85 and Met-121–Glu-122. Asp-136 is a catalytic residue.

It belongs to the MoaC family. Homohexamer; trimer of dimers.

The enzyme catalyses (8S)-3',8-cyclo-7,8-dihydroguanosine 5'-triphosphate = cyclic pyranopterin phosphate + diphosphate. Its pathway is cofactor biosynthesis; molybdopterin biosynthesis. Its function is as follows. Catalyzes the conversion of (8S)-3',8-cyclo-7,8-dihydroguanosine 5'-triphosphate to cyclic pyranopterin monophosphate (cPMP). The protein is Cyclic pyranopterin monophosphate synthase of Rhodospirillum rubrum (strain ATCC 11170 / ATH 1.1.1 / DSM 467 / LMG 4362 / NCIMB 8255 / S1).